The sequence spans 801 residues: Mitochondrial intermediate peptidase (801 aa).

Residues 1–41 constitute a mitochondrion transit peptide; sequence MKDQLLVPLRRRPWTCQKCLQRLQLPRHQTRRSFETAASPF. Residue His-564 coordinates Zn(2+). Glu-565 is a catalytic residue. Positions 568 and 571 each coordinate Zn(2+).

The protein belongs to the peptidase M3 family. Requires Zn(2+) as cofactor.

Its subcellular location is the mitochondrion matrix. It catalyses the reaction Release of an N-terminal octapeptide as second stage of processing of some proteins imported into the mitochondrion.. Functionally, cleaves proteins, imported into the mitochondrion, to their mature size. While most mitochondrial precursor proteins are processed to the mature form in one step by mitochondrial processing peptidase (MPP), the sequential cleavage by MIP of an octapeptide after initial processing by MPP is a required step for a subgroup of nuclear-encoded precursor proteins destined for the matrix or the inner membrane. The polypeptide is Mitochondrial intermediate peptidase (oct1) (Aspergillus fumigatus (strain ATCC MYA-4609 / CBS 101355 / FGSC A1100 / Af293) (Neosartorya fumigata)).